A 1021-amino-acid polypeptide reads, in one-letter code: Receptor-like protein EIX2 (1021 aa).

The signal sequence occupies residues 1–24; that stretch reads MGKRTNPRHFLVTWSLLLLETAFG. The segment at 25 to 109 is N-cap; that stretch reads LTSREVNKTL…PILTGKVSPS (85 aa). Topologically, residues 25 to 963 are extracellular; sequence LTSREVNKTL…DDDDEFSSLE (939 aa). Residue Asn31 is glycosylated (N-linked (GlcNAc...) asparagine). LRR repeat units lie at residues 113 to 136, 138 to 161, 162 to 184, 186 to 211, 214 to 237, and 239 to 262; these read LEYL…RFIG, LKRL…QFQN, LTSL…VWLS, LSSL…ITKV, LKEL…VANS, and LISL…SWLF. Asn145 and Asn161 each carry an N-linked (GlcNAc...) asparagine glycan. Asn236 carries an N-linked (GlcNAc...) asparagine glycan. A glycan (N-linked (GlcNAc...) asparagine) is linked at Asn263. 14 LRR repeats span residues 265 to 288, 290 to 313, 314 to 337, 342 to 365, 366 to 388, 389 to 412, 413 to 436, 437 to 459, 461 to 483, 484 to 507, 509 to 532, 533 to 555, 557 to 581, and 583 to 607; these read STSL…RFGS, MYLE…SFGN, LTRL…LFLR, RKSL…VTRF, SSLK…RVGQ, VSSL…LALF, PSLR…IGKL, SQLR…MGQL, NLER…HFSN, LSSL…DWVP, FQLQ…LQTQ, NNYT…WFSN, PPEL…IVSK, and DYMI…NIQI. Residue Asn313 is glycosylated (N-linked (GlcNAc...) asparagine). N-linked (GlcNAc...) asparagine glycosylation is present at Asn483. N-linked (GlcNAc...) asparagine glycans are attached at residues Asn534, Asn544, Asn564, and Asn593. Residues 608-626 form an LRR 21; degenerate repeat; that stretch reads FYLHKNHFSGSISSICRNT. 6 LRR repeats span residues 627–651, 652–675, 677–698, 699–722, 723–747, and 749–773; these read IGAA…WMNM, SNLA…LGSL, NLEA…FSQC, QLLQ…IGTD, LLQL…ICQL, and FLQI…NFTI. N-linked (GlcNAc...) asparagine glycans are attached at residues Asn650 and Asn663. Residues Asn770 and Asn778 are each glycosylated (N-linked (GlcNAc...) asparagine). LRR repeat units lie at residues 818–842, 843–866, 867–890, and 892–913; these read LLYL…IAEM, RGLR…IGQM, KLLE…LSNL, and FLSV…STQL. Residues Asn849, Asn856, and Asn889 are each glycosylated (N-linked (GlcNAc...) asparagine). Residues 914-963 are C-cap/acidic domain; the sequence is QSFDRSSYSGNAQLCGPPLEECPGYAPPIDRGSNTNPQEHDDDDEFSSLE. A helical transmembrane segment spans residues 964–984; the sequence is FYVSMVLGFFVTFWGILGCLI. Residues 985–1021 are Cytoplasmic-facing; that stretch reads VNRSWRNAYFTFLTDMKSWLHMTSRVCFARLKGKLRN.

This sequence belongs to the RLP family. As to quaternary structure, interacts with EIX elicitor protein.

The protein localises to the cell membrane. Functionally, involved in plant defense. Confers resistance to the fungal pathogen T.viride through recognition of the EIX elicitor protein. This is Receptor-like protein EIX2 from Solanum lycopersicum (Tomato).